We begin with the raw amino-acid sequence, 115 residues long: Large ribosomal subunit protein P2 (115 aa).

Position 1 is an N-acetylmethionine (M1). At S19 the chain carries Phosphoserine. K21 bears the N6-acetyllysine; alternate mark. The residue at position 21 (K21) is an N6-succinyllysine; alternate. Positions 76-90 (APGSAAPAAGSAPAA) are enriched in low complexity. Positions 76 to 115 (APGSAAPAAGSAPAAAEEKKDEKKEESEESDDDMGFGLFD) are disordered. A phosphoserine mark is found at S79 and S86. The span at 91-101 (AEEKKDEKKEE) shows a compositional bias: basic and acidic residues. A phosphoserine mark is found at S102 and S105.

This sequence belongs to the eukaryotic ribosomal protein P1/P2 family. In terms of assembly, heterodimer with RPLP1 at the lateral ribosomal stalk of the large ribosomal subunit.

Functionally, plays an important role in the elongation step of protein synthesis. This chain is Large ribosomal subunit protein P2 (Rplp2), found in Rattus norvegicus (Rat).